Here is a 369-residue protein sequence, read N- to C-terminus: 3-dehydroquinate synthase (369 aa).

Residues 75–80 (DGEEHK), 109–113 (GVIGD), 133–134 (TT), lysine 146, lysine 155, and 173–176 (TLKT) each bind NAD(+). Residues glutamate 188, histidine 251, and histidine 268 each contribute to the Zn(2+) site.

The protein belongs to the sugar phosphate cyclases superfamily. Dehydroquinate synthase family. Co(2+) is required as a cofactor. The cofactor is Zn(2+). Requires NAD(+) as cofactor.

The protein resides in the cytoplasm. It catalyses the reaction 7-phospho-2-dehydro-3-deoxy-D-arabino-heptonate = 3-dehydroquinate + phosphate. Its pathway is metabolic intermediate biosynthesis; chorismate biosynthesis; chorismate from D-erythrose 4-phosphate and phosphoenolpyruvate: step 2/7. Functionally, catalyzes the conversion of 3-deoxy-D-arabino-heptulosonate 7-phosphate (DAHP) to dehydroquinate (DHQ). This chain is 3-dehydroquinate synthase, found in Legionella pneumophila (strain Paris).